The chain runs to 184 residues: Large ribosomal subunit protein eL18 (184 aa).

The protein belongs to the eukaryotic ribosomal protein eL18 family.

The protein localises to the cytoplasm. The sequence is that of Large ribosomal subunit protein eL18 (RPL18) from Theileria parva (East coast fever infection agent).